The sequence spans 159 residues: 6,7-dimethyl-8-ribityllumazine synthase (159 aa).

Residues Tyr-23, 58–60 (AYE), and 82–84 (TII) contribute to the 5-amino-6-(D-ribitylamino)uracil site. The active-site Proton donor is the His-90. 5-amino-6-(D-ribitylamino)uracil is bound at residue Ile-115. Arg-129 is a (2S)-2-hydroxy-3-oxobutyl phosphate binding site.

Belongs to the DMRL synthase family. Forms an icosahedral capsid composed of 60 subunits, arranged as a dodecamer of pentamers.

It catalyses the reaction (2S)-2-hydroxy-3-oxobutyl phosphate + 5-amino-6-(D-ribitylamino)uracil = 6,7-dimethyl-8-(1-D-ribityl)lumazine + phosphate + 2 H2O + H(+). It participates in cofactor biosynthesis; riboflavin biosynthesis; riboflavin from 2-hydroxy-3-oxobutyl phosphate and 5-amino-6-(D-ribitylamino)uracil: step 1/2. Catalyzes the formation of 6,7-dimethyl-8-ribityllumazine by condensation of 5-amino-6-(D-ribitylamino)uracil with 3,4-dihydroxy-2-butanone 4-phosphate. This is the penultimate step in the biosynthesis of riboflavin. This is 6,7-dimethyl-8-ribityllumazine synthase from Buchnera aphidicola subsp. Baizongia pistaciae (strain Bp).